The primary structure comprises 1548 residues: Dicer-like protein 1 (1548 aa).

Positions 1-41 are enriched in basic and acidic residues; that stretch reads MGDPAAHEMADLERGFSSEDDAEYRSGDDEASKFVENEPSK. The disordered stretch occupies residues 1–48; the sequence is MGDPAAHEMADLERGFSSEDDAEYRSGDDEASKFVENEPSKRGKISQK. The Helicase ATP-binding domain maps to 106–289; the sequence is LFERAKQQNT…QAAIELEGLL (184 aa). 119–126 serves as a coordination point for ATP; the sequence is LDTGSGKT. The DEAH box signature appears at 232–235; that stretch reads DEAH. The Helicase C-terminal domain occupies 428 to 589; that stretch reads TLSKLLEEYF…FCNTQPEDRL (162 aa). The 95-residue stretch at 624–718 folds into the Dicer dsRNA-binding fold domain; that stretch reads SLPILQAFLN…RSKFVEKRHV (95 aa). Positions 871-1006 constitute a PAZ domain; the sequence is PLLRHVADRD…FVLEPMRISP (136 aa). 2 consecutive RNase III domains span residues 1051 to 1197 and 1248 to 1411; these read LTKD…MTTR and AQKI…VDSK. Mg(2+) contacts are provided by E1288, D1397, and E1400. The DRBM domain occupies 1445–1518; that stretch reads TFFTQYVFET…ARKALDKLRS (74 aa). Zn(2+) contacts are provided by C1457, H1489, C1530, and C1532.

Belongs to the helicase family. Dicer subfamily. The cofactor is Mg(2+). It depends on Mn(2+) as a cofactor.

In terms of biological role, dicer-like endonuclease involved in cleaving double-stranded RNA in the RNA interference (RNAi) pathway. Produces 21 to 25 bp dsRNAs (siRNAs) which target the selective destruction of homologous RNAs leading to sequence-specific suppression of gene expression, called post-transcriptional gene silencing (PTGS). Part of a broad host defense response against viral infection and transposons. The chain is Dicer-like protein 1 (DCL-1) from Cryphonectria parasitica (Chestnut blight fungus).